The primary structure comprises 209 residues: Lipid A acyltransferase PagP (209 aa).

A signal peptide spans 1–24 (MHLKRALITLSLITLPIIPFSSYA). Catalysis depends on residues His-81, Asp-124, and Ser-125.

It belongs to the lipid A palmitoyltransferase family. Homodimer.

The protein localises to the cell outer membrane. It carries out the reaction a lipid A + a 1,2-diacyl-sn-glycero-3-phosphocholine = a hepta-acyl lipid A + a 2-acyl-sn-glycero-3-phosphocholine. It catalyses the reaction a lipid IVA + a 1,2-diacyl-sn-glycero-3-phosphocholine = a lipid IVB + a 2-acyl-sn-glycero-3-phosphocholine. The catalysed reaction is a lipid IIA + a 1,2-diacyl-sn-glycero-3-phosphocholine = a lipid IIB + a 2-acyl-sn-glycero-3-phosphocholine. In terms of biological role, transfers a fatty acid residue from the sn-1 position of a phospholipid to the N-linked hydroxyfatty acid chain on the proximal unit of lipid A or its precursors. The protein is Lipid A acyltransferase PagP of Pectobacterium parmentieri (strain WPP163) (Pectobacterium wasabiae (strain WPP163)).